Consider the following 125-residue polypeptide: Egg cell-secreted protein 1.3 (125 aa).

Residues 1–24 (MASNTSFLFVTVTLLLVLNVSSRA) form the signal peptide.

Belongs to the plant egg cell-secreted peptide family. Restricted to female reproductive tissues, specifically accumulating in storage vesicles of the unfertilized egg cell.

The protein localises to the cytoplasmic vesicle. It localises to the secreted. Functionally, involved in the regulation of gamete interactions during the double fertilization and to prevent multiple-pollen tube attraction; mediates the redistribution of the gamete fusogen HAP2/GCS1 to the cell surface after secretion upon sperm arrival. The protein is Egg cell-secreted protein 1.3 (EC1.3) of Arabidopsis thaliana (Mouse-ear cress).